Reading from the N-terminus, the 506-residue chain is Glutamate--tRNA ligase (506 aa).

Residues 14-24 (PSPTGYLHIGG) carry the 'HIGH' region motif. Residues 261–265 (KLSKR) carry the 'KMSKS' region motif. K264 contacts ATP.

The protein belongs to the class-I aminoacyl-tRNA synthetase family. Glutamate--tRNA ligase type 1 subfamily. In terms of assembly, monomer.

It is found in the cytoplasm. It catalyses the reaction tRNA(Glu) + L-glutamate + ATP = L-glutamyl-tRNA(Glu) + AMP + diphosphate. In terms of biological role, catalyzes the attachment of glutamate to tRNA(Glu) in a two-step reaction: glutamate is first activated by ATP to form Glu-AMP and then transferred to the acceptor end of tRNA(Glu). This chain is Glutamate--tRNA ligase, found in Roseiflexus sp. (strain RS-1).